The chain runs to 371 residues: Ribosomal RNA small subunit methyltransferase H (371 aa).

Residues 92–94, Asp-111, Tyr-138, Asp-159, and Gln-166 each bind S-adenosyl-L-methionine; that span reads GGH.

The protein belongs to the methyltransferase superfamily. RsmH family.

Its subcellular location is the cytoplasm. The enzyme catalyses cytidine(1402) in 16S rRNA + S-adenosyl-L-methionine = N(4)-methylcytidine(1402) in 16S rRNA + S-adenosyl-L-homocysteine + H(+). In terms of biological role, specifically methylates the N4 position of cytidine in position 1402 (C1402) of 16S rRNA. This Mycolicibacterium gilvum (strain PYR-GCK) (Mycobacterium gilvum (strain PYR-GCK)) protein is Ribosomal RNA small subunit methyltransferase H.